A 339-amino-acid polypeptide reads, in one-letter code: Ketol-acid reductoisomerase (NADP(+)) (339 aa).

Positions 1–182 constitute a KARI N-terminal Rossmann domain; sequence MRVYYDRDAD…GGGRSGVIET (182 aa). NADP(+)-binding positions include 24 to 27, Arg-48, Ser-51, Thr-53, and 83 to 86; these read YGSQ and DELQ. Residue His-108 is part of the active site. Position 134 (Gly-134) interacts with NADP(+). The KARI C-terminal knotted domain maps to 183-328; it reads TFKEECETDL…EKLRGMMPWI (146 aa). 4 residues coordinate Mg(2+): Asp-191, Glu-195, Glu-227, and Glu-231. Ser-252 serves as a coordination point for substrate.

Belongs to the ketol-acid reductoisomerase family. Requires Mg(2+) as cofactor.

The enzyme catalyses (2R)-2,3-dihydroxy-3-methylbutanoate + NADP(+) = (2S)-2-acetolactate + NADPH + H(+). It catalyses the reaction (2R,3R)-2,3-dihydroxy-3-methylpentanoate + NADP(+) = (S)-2-ethyl-2-hydroxy-3-oxobutanoate + NADPH + H(+). It functions in the pathway amino-acid biosynthesis; L-isoleucine biosynthesis; L-isoleucine from 2-oxobutanoate: step 2/4. The protein operates within amino-acid biosynthesis; L-valine biosynthesis; L-valine from pyruvate: step 2/4. Its function is as follows. Involved in the biosynthesis of branched-chain amino acids (BCAA). Catalyzes an alkyl-migration followed by a ketol-acid reduction of (S)-2-acetolactate (S2AL) to yield (R)-2,3-dihydroxy-isovalerate. In the isomerase reaction, S2AL is rearranged via a Mg-dependent methyl migration to produce 3-hydroxy-3-methyl-2-ketobutyrate (HMKB). In the reductase reaction, this 2-ketoacid undergoes a metal-dependent reduction by NADPH to yield (R)-2,3-dihydroxy-isovalerate. This is Ketol-acid reductoisomerase (NADP(+)) from Brucella anthropi (strain ATCC 49188 / DSM 6882 / CCUG 24695 / JCM 21032 / LMG 3331 / NBRC 15819 / NCTC 12168 / Alc 37) (Ochrobactrum anthropi).